The chain runs to 115 residues: Large ribosomal subunit protein bL20 (115 aa).

The protein belongs to the bacterial ribosomal protein bL20 family.

Binds directly to 23S ribosomal RNA and is necessary for the in vitro assembly process of the 50S ribosomal subunit. It is not involved in the protein synthesizing functions of that subunit. The chain is Large ribosomal subunit protein bL20 from Chlorobium luteolum (strain DSM 273 / BCRC 81028 / 2530) (Pelodictyon luteolum).